Here is a 1097-residue protein sequence, read N- to C-terminus: Leukemia inhibitory factor receptor (1097 aa).

A signal peptide spans 1–44; sequence MMDIYVCLKRPSWMVDNKRMRTASNFQWLLSTFILLYLMNQVNS. Over 45–833 the chain is Extracellular; that stretch reads QKKGAPHDLK…SMYVVTKENS (789 aa). Residues 49-138 form the Fibronectin type-III 1 domain; the sequence is APHDLKCVTN…EQNVSLIPDT (90 aa). 2 disulfides stabilise this stretch: C55–C65 and C82–C90. N64, N85, N131, N143, N191, N243, and N303 each carry an N-linked (GlcNAc...) asparagine glycan. A disulfide bridge links C213 with C270. Fibronectin type-III domains lie at 335–434, 435–534, 538–629, 627–719, and 724–833; these read TPQQ…VYPH, TPTS…TEAS, GPDT…IPND, PNDD…IGYI, and PIVA…KENS. Residues C341 and C351 are joined by a disulfide bond. N390, N407, N426, N445, N481, and N489 each carry an N-linked (GlcNAc...) asparagine glycan. C466 and C511 are joined by a disulfide. Residues 519-523 carry the WSXWS motif motif; that stretch reads WSKWS. Residues N572, N652, N663, N680, N729, and N787 are each glycosylated (N-linked (GlcNAc...) asparagine). The helical transmembrane segment at 834–858 threads the bilayer; it reads VGLIIAILIPVAVAVIVGVVTSILC. Residues 859–1097 lie on the Cytoplasmic side of the membrane; the sequence is YRKREWIKET…TNFFQNKPND (239 aa). The Box 1 motif signature appears at 869-877; sequence FYPDIPNPE. S927 carries the phosphoserine modification. A disordered region spans residues 983–1005; that stretch reads PQAKPEEEQENDPVGGAGYKPQM. S1044 is modified (phosphoserine). Residues 1066-1097 are disordered; that stretch reads RQFLIPPKDEDSPKSNGGGWSFTNFFQNKPND. A compositionally biased stretch (polar residues) spans 1086-1097; that stretch reads SFTNFFQNKPND.

This sequence belongs to the type I cytokine receptor family. Type 2 subfamily. Heterodimer composed of LIFR and IL6ST. The heterodimer formed by LIFR and IL6ST interacts with the complex formed by CNTF and CNTFR.

Its subcellular location is the cell membrane. It is found in the secreted. Its function is as follows. Signal-transducing molecule. May have a common pathway with IL6ST. The soluble form inhibits the biological activity of LIF by blocking its binding to receptors on target cells. In Homo sapiens (Human), this protein is Leukemia inhibitory factor receptor (LIFR).